A 575-amino-acid chain; its full sequence is Phosphoenolpyruvate-protein phosphotransferase (575 aa).

Histidine 191 functions as the Tele-phosphohistidine intermediate in the catalytic mechanism. 2 residues coordinate phosphoenolpyruvate: arginine 298 and arginine 334. 2 residues coordinate Mg(2+): glutamate 435 and aspartate 459. Phosphoenolpyruvate-binding positions include 458–459 and arginine 469; that span reads ND. Cysteine 506 acts as the Proton donor in catalysis.

It belongs to the PEP-utilizing enzyme family. Homodimer. The cofactor is Mg(2+).

The protein resides in the cytoplasm. It catalyses the reaction L-histidyl-[protein] + phosphoenolpyruvate = N(pros)-phospho-L-histidyl-[protein] + pyruvate. Functionally, general (non sugar-specific) component of the phosphoenolpyruvate-dependent sugar phosphotransferase system (sugar PTS). This major carbohydrate active-transport system catalyzes the phosphorylation of incoming sugar substrates concomitantly with their translocation across the cell membrane. Enzyme I transfers the phosphoryl group from phosphoenolpyruvate (PEP) to the phosphoryl carrier protein (HPr). This chain is Phosphoenolpyruvate-protein phosphotransferase (ptsI), found in Lactococcus lactis subsp. lactis (strain IL1403) (Streptococcus lactis).